We begin with the raw amino-acid sequence, 779 residues long: Transcription activator of gluconeogenesis BDCG_02812 (779 aa).

Residues 1 to 70 (MTASTRNGSP…NAKDPLRPRR (70 aa)) form a disordered region. The span at 25-61 (KSMTTTPANPPETKSQTNGKGSGTAQSSQKPASTSAN) shows a compositional bias: polar residues. The zn(2)-C6 fungal-type DNA-binding region spans 77–105 (CFACQRAHLTCGDERPCQRCIKRGLQDAC). Disordered stretches follow at residues 135–163 (QANT…QSVS), 202–239 (SVFH…SVSG), 285–344 (GAGD…ANPR), 401–421 (TNLM…PGLK), 559–590 (GSSL…PHTG), and 655–732 (FHGK…QTWG). The span at 202 to 226 (SVFHAQSPSSTQNFDLSSNPQTQNL) shows a compositional bias: polar residues. A compositionally biased stretch (low complexity) spans 227-238 (SSAMSQTASSVS). Composition is skewed to polar residues over residues 291–322 (PSDS…NQSP), 333–344 (WNPTGQGQANPR), and 401–416 (TNLM…SRIS). Residues 560 to 572 (SSLSSASSVRGSS) show a composition bias toward low complexity. Over residues 573 to 586 (TFTPRNNNTHNSID) the composition is skewed to polar residues. Over residues 672–719 (TGTTTSGDVATTTATGTSTSNGANANTNGNNTNPNDPSSAASSSASSA) the composition is skewed to low complexity. The span at 720 to 729 (LQGPQQSPRQ) shows a compositional bias: polar residues.

The protein belongs to the ERT1/acuK family.

Its subcellular location is the nucleus. Functionally, transcription factor which regulates nonfermentable carbon utilization. Activator of gluconeogenetic genes. The sequence is that of Transcription activator of gluconeogenesis BDCG_02812 from Ajellomyces dermatitidis (strain ER-3 / ATCC MYA-2586) (Blastomyces dermatitidis).